Consider the following 397-residue polypeptide: Phosphoglycerate kinase (397 aa).

Residues 22 to 24 (DYN), R38, 61 to 64 (HLGR), R119, and R152 each bind substrate. ATP is bound by residues K203, G294, E325, and 351 to 354 (GGDT).

This sequence belongs to the phosphoglycerate kinase family. Monomer.

The protein localises to the cytoplasm. The catalysed reaction is (2R)-3-phosphoglycerate + ATP = (2R)-3-phospho-glyceroyl phosphate + ADP. Its pathway is carbohydrate degradation; glycolysis; pyruvate from D-glyceraldehyde 3-phosphate: step 2/5. This Aquifex aeolicus (strain VF5) protein is Phosphoglycerate kinase (pgk).